An 865-amino-acid polypeptide reads, in one-letter code: Armadillo repeat-containing protein 2 (865 aa).

2 disordered regions span residues 39 to 75 (TVRT…FSVH) and 214 to 243 (SVPF…DQSR). Positions 60-75 (SSRTPENRPPSSFSVH) are enriched in polar residues. ARM repeat units follow at residues 261 to 300 (IEVD…HALE), 303 to 343 (NMLG…ALKV), 362 to 402 (EKND…TIKF), 407 to 448 (PEFL…HLLV), 461 to 502 (PLAR…KLTS), 505 to 546 (DCCV…NLTA), 550 to 587 (QARE…GEGD), 589 to 614 (RPEA…NLAI), 617 to 660 (GVGP…NLSY), 662 to 703 (KVKN…NLSQ), 705 to 744 (HDIC…NLTV), and 746 to 788 (RDKR…NFSE).

Required for sperm flagellum axoneme organization and function. Involved in axonemal central pair complex assembly and/or stability. This Bos taurus (Bovine) protein is Armadillo repeat-containing protein 2.